The sequence spans 155 residues: Transcriptional repressor NrdR (155 aa).

Positions 1-22 are disordered; sequence MRCPFCGHDETQVKDSRPSEDG. The segment at 3 to 34 is a zinc-finger region; sequence CPFCGHDETQVKDSRPSEDGAAIRRRRLCPQC. Residues 7–22 are compositionally biased toward basic and acidic residues; sequence GHDETQVKDSRPSEDG. An ATP-cone domain is found at 49–139; that stretch reads ITILKRSGRR…VYRDFRETQD (91 aa).

This sequence belongs to the NrdR family. It depends on Zn(2+) as a cofactor.

Functionally, negatively regulates transcription of bacterial ribonucleotide reductase nrd genes and operons by binding to NrdR-boxes. This chain is Transcriptional repressor NrdR, found in Phenylobacterium zucineum (strain HLK1).